The sequence spans 235 residues: uncharacterized protein (235 aa).

7 consecutive transmembrane segments (helical) span residues 2–22 (VIGPFINASAVLLGGVLGALL), 34–54 (MTSIFGLASLGIGILLVVKCA), 56–76 (LPAMVLATLLGALIGEICLLE), 102–122 (FIQNYVAIIVLFCASGTGIFG), 147–167 (MIFACSLGIAVSVISIPLLII), 178–198 (ILPLTTPSMMADFSAVGGLLL), and 210–230 (MFPVVNMLPALLLAMPLSAAW).

It is found in the cell membrane. This is an uncharacterized protein from Escherichia coli (strain K12).